A 103-amino-acid chain; its full sequence is Large ribosomal subunit protein bL21 (103 aa).

Belongs to the bacterial ribosomal protein bL21 family. In terms of assembly, part of the 50S ribosomal subunit. Contacts protein L20.

In terms of biological role, this protein binds to 23S rRNA in the presence of protein L20. The protein is Large ribosomal subunit protein bL21 of Ruminiclostridium cellulolyticum (strain ATCC 35319 / DSM 5812 / JCM 6584 / H10) (Clostridium cellulolyticum).